The primary structure comprises 676 residues: Protein kinase C delta type (676 aa).

One can recognise a C2 domain in the interval 1 to 106; sequence MAPFLRIAFN…KNNGKAEFWL (106 aa). 2 positions are modified to phosphothreonine: T43 and T50. At Y64 the chain carries Phosphotyrosine. At S130 the chain carries Phosphoserine. A Phosphothreonine modification is found at T141. Y155 carries the post-translational modification Phosphotyrosine. The segment at 158 to 208 adopts a Phorbol-ester/DAG-type 1 zinc-finger fold; sequence NHEFIATFFGQPTFCSVCKDFVWGLNKQGYKCRQCNAAIHKKCIDKIIGRC. T218 is modified (phosphothreonine). A Phorbol-ester/DAG-type 2 zinc finger spans residues 230-280; it reads PHRFKVHNYMSPTFCDHCGSLLWGLVKQGLKCEDCGMNVHHKCREKVANLC. Residues S299, S302, and S304 each carry the phosphoserine; by autocatalysis modification. S307 is modified (phosphoserine). Phosphotyrosine is present on Y313. Y334 is subject to Phosphotyrosine; by SRC. Residues 349 to 603 enclose the Protein kinase domain; the sequence is FIFHKVLGKG…TGNIKIHPFF (255 aa). Position 355-363 (355-363) interacts with ATP; it reads LGKGSFGKV. At Y374 the chain carries Phosphotyrosine. ATP is bound at residue K378. T451 bears the Phosphothreonine mark. D473 serves as the catalytic Proton acceptor. Residues S503 and S506 each carry the phosphoserine modification. Residue T507 is modified to Phosphothreonine; by autocatalysis. Residue Y567 is modified to Phosphotyrosine. An AGC-kinase C-terminal domain is found at 604 to 675; sequence KTINWTLLEK…VNPKFEHLLE (72 aa). Phosphoserine occurs at positions 645, 654, 658, and 664.

Belongs to the protein kinase superfamily. AGC Ser/Thr protein kinase family. PKC subfamily. In terms of assembly, interacts with PDPK1 (via N-terminal region). Interacts with RAD9A. Interacts with CDCP1. Interacts with MUC1. Interacts with VASP. Interacts with CAVIN3. Interacts with PRKD2 (via N-terminus and zing-finger domain 1 and 2) in response to oxidative stress; the interaction is independent of PRKD2 tyrosine phosphorylation. Interacts with PLSC3; interaction is enhanced by UV irradiation. Interacts with PRKCH upstream open reading frame 2; the interaction leads to inhibition of kinase activity. Post-translationally, autophosphorylated and/or phosphorylated at Thr-507, within the activation loop; phosphorylation at Thr-507 is not a prerequisite for enzymatic activity. Autophosphorylated at Ser-299, Ser-302 and Ser-304. Upon TNFSF10/TRAIL treatment, phosphorylated at Tyr-155; phosphorylation is required for its translocation to the endoplasmic reticulum and cleavage by caspase-3. Phosphorylated at Tyr-313, Tyr-334 and Tyr-567; phosphorylation of Tyr-313 and Tyr-567 following thrombin or zymosan stimulation potentiates its kinase activity. Phosphorylated by protein kinase PDPK1; phosphorylation is inhibited by the apoptotic C-terminal cleavage product of PKN2. Phosphorylated at Tyr-313 through a SYK and SRC mechanism downstream of C-type lectin receptors activation, promoting its activation. Proteolytically cleaved into a catalytic subunit and a regulatory subunit by caspase-3 during apoptosis which results in kinase activation.

Its subcellular location is the cytoplasm. It localises to the perinuclear region. The protein resides in the nucleus. It is found in the cell membrane. The protein localises to the mitochondrion. Its subcellular location is the endomembrane system. The enzyme catalyses L-seryl-[protein] + ATP = O-phospho-L-seryl-[protein] + ADP + H(+). It catalyses the reaction L-threonyl-[protein] + ATP = O-phospho-L-threonyl-[protein] + ADP + H(+). The catalysed reaction is L-tyrosyl-[protein] + ATP = O-phospho-L-tyrosyl-[protein] + ADP + H(+). Its activity is regulated as follows. Novel PKCs (PRKCD, PRKCE, PRKCH and PRKCQ) are calcium-insensitive, but activated by diacylglycerol (DAG) and phosphatidylserine. Three specific sites; Thr-507 (activation loop of the kinase domain), Ser-645 (turn motif) and Ser-664 (hydrophobic region), need to be phosphorylated for its full activation. Activated by caspase-3 (CASP3) cleavage during apoptosis. After cleavage, the pseudosubstrate motif in the regulatory subunit is released from the substrate recognition site of the catalytic subunit, which enables PRKCD to become constitutively activated. The catalytic subunit which displays properties of a sphingosine-dependent protein kinase is activated by D-erythro-sphingosine (Sph) or N,N-dimethyl-D-erythrosphingosine (DMS) or N,N,N-trimethyl-D-erythrosphingosine (TMS), but not by ceramide or Sph-1-P and is strongly inhibited by phosphatidylserine. Inhibited by PRKCH upstream open reading frame 2. Functionally, calcium-independent, phospholipid- and diacylglycerol (DAG)-dependent serine/threonine-protein kinase that plays contrasting roles in cell death and cell survival by functioning as a pro-apoptotic protein during DNA damage-induced apoptosis, but acting as an anti-apoptotic protein during cytokine receptor-initiated cell death, is involved in tumor suppression as well as survival of several cancers, is required for oxygen radical production by NADPH oxidase and acts as positive or negative regulator in platelet functional responses. Negatively regulates B cell proliferation and also has an important function in self-antigen induced B cell tolerance induction. Upon DNA damage, activates the promoter of the death-promoting transcription factor BCLAF1/Btf to trigger BCLAF1-mediated p53/TP53 gene transcription and apoptosis. In response to oxidative stress, interact with and activate CHUK/IKKA in the nucleus, causing the phosphorylation of p53/TP53. In the case of ER stress or DNA damage-induced apoptosis, can form a complex with the tyrosine-protein kinase ABL1 which trigger apoptosis independently of p53/TP53. In cytosol can trigger apoptosis by activating MAPK11 or MAPK14, inhibiting AKT1 and decreasing the level of X-linked inhibitor of apoptosis protein (XIAP), whereas in nucleus induces apoptosis via the activation of MAPK8 or MAPK9. Upon ionizing radiation treatment, is required for the activation of the apoptosis regulators BAX and BAK, which trigger the mitochondrial cell death pathway. Can phosphorylate MCL1 and target it for degradation which is sufficient to trigger for BAX activation and apoptosis. Is required for the control of cell cycle progression both at G1/S and G2/M phases. Mediates phorbol 12-myristate 13-acetate (PMA)-induced inhibition of cell cycle progression at G1/S phase by up-regulating the CDK inhibitor CDKN1A/p21 and inhibiting the cyclin CCNA2 promoter activity. In response to UV irradiation can phosphorylate CDK1, which is important for the G2/M DNA damage checkpoint activation. Can protect glioma cells from the apoptosis induced by TNFSF10/TRAIL, probably by inducing increased phosphorylation and subsequent activation of AKT1. Is highly expressed in a number of cancer cells and promotes cell survival and resistance against chemotherapeutic drugs by inducing cyclin D1 (CCND1) and hyperphosphorylation of RB1, and via several pro-survival pathways, including NF-kappa-B, AKT1 and MAPK1/3 (ERK1/2). Involved in antifungal immunity by mediating phosphorylation and activation of CARD9 downstream of C-type lectin receptors activation, promoting interaction between CARD9 and BCL10, followed by activation of NF-kappa-B and MAP kinase p38 pathways. Can also act as tumor suppressor upon mitogenic stimulation with PMA or TPA. In N-formyl-methionyl-leucyl-phenylalanine (fMLP)-treated cells, is required for NCF1 (p47-phox) phosphorylation and activation of NADPH oxidase activity, and regulates TNF-elicited superoxide anion production in neutrophils, by direct phosphorylation and activation of NCF1 or indirectly through MAPK1/3 (ERK1/2) signaling pathways. May also play a role in the regulation of NADPH oxidase activity in eosinophil after stimulation with IL5, leukotriene B4 or PMA. In collagen-induced platelet aggregation, acts a negative regulator of filopodia formation and actin polymerization by interacting with and negatively regulating VASP phosphorylation. Downstream of PAR1, PAR4 and CD36/GP4 receptors, regulates differentially platelet dense granule secretion; acts as a positive regulator in PAR-mediated granule secretion, whereas it negatively regulates CD36/GP4-mediated granule release. Phosphorylates MUC1 in the C-terminal and regulates the interaction between MUC1 and beta-catenin. The catalytic subunit phosphorylates 14-3-3 proteins (YWHAB, YWHAZ and YWHAH) in a sphingosine-dependent fashion. Phosphorylates ELAVL1 in response to angiotensin-2 treatment. Phosphorylates mitochondrial phospholipid scramblase 3 (PLSCR3), resulting in increased cardiolipin expression on the mitochondrial outer membrane which facilitates apoptosis. Phosphorylates SMPD1 which induces SMPD1 secretion. This Homo sapiens (Human) protein is Protein kinase C delta type.